The chain runs to 255 residues: Type III pantothenate kinase (255 aa).

6 to 13 (DIGNSNID) serves as a coordination point for ATP. 107 to 110 (GADL) provides a ligand contact to substrate. D109 functions as the Proton acceptor in the catalytic mechanism. A K(+)-binding site is contributed by D129. T132 contacts ATP. T183 serves as a coordination point for substrate.

Belongs to the type III pantothenate kinase family. As to quaternary structure, homodimer. NH4(+) is required as a cofactor. It depends on K(+) as a cofactor.

The protein resides in the cytoplasm. The catalysed reaction is (R)-pantothenate + ATP = (R)-4'-phosphopantothenate + ADP + H(+). It functions in the pathway cofactor biosynthesis; coenzyme A biosynthesis; CoA from (R)-pantothenate: step 1/5. Its function is as follows. Catalyzes the phosphorylation of pantothenate (Pan), the first step in CoA biosynthesis. The sequence is that of Type III pantothenate kinase from Dictyoglomus turgidum (strain DSM 6724 / Z-1310).